A 92-amino-acid polypeptide reads, in one-letter code: Small ribosomal subunit protein uS19c (92 aa).

The protein belongs to the universal ribosomal protein uS19 family.

The protein localises to the plastid. It localises to the chloroplast. Functionally, protein S19 forms a complex with S13 that binds strongly to the 16S ribosomal RNA. The chain is Small ribosomal subunit protein uS19c from Oltmannsiellopsis viridis (Marine flagellate).